Here is a 461-residue protein sequence, read N- to C-terminus: Transcription factor GTE3, chloroplastic (461 aa).

Residues 1–11 (MASGPIAGGGV) are compositionally biased toward gly residues. Residues 1–41 (MASGPIAGGGVSKTKHKWSDSGNKSQKRSKPTVANSNSLGL) are disordered. A chloroplast-targeting transit peptide spans 1-51 (MASGPIAGGGVSKTKHKWSDSGNKSQKRSKPTVANSNSLGLEDNHQMMKIS). The Bromo domain occupies 114–220 (KGTVQILKSC…NLFEEKWVPL (107 aa)). The NET domain maps to 298-379 (LVEEASANRD…EYKESLSKKK (82 aa)). A compositionally biased stretch (basic and acidic residues) spans 376 to 392 (SKKKEEQGLDSERDAES). The tract at residues 376–461 (SKKKEEQGLD…SSGHESDTGN (86 aa)) is disordered. Residues 393-412 (FHNSVHESNTLVTGLESSKV) show a composition bias toward polar residues. Low complexity predominate over residues 429-451 (GGSSSSNSSSSGSGSGSSGSDSD). A compositionally biased stretch (basic and acidic residues) spans 452 to 461 (SSGHESDTGN).

As to quaternary structure, interacts with SIZ1 (via PHD domain). Post-translationally, sumoylated by SIZ1. Sumoylation reduces capacity to bind to acetylated histone H3.

Its subcellular location is the plastid. The protein localises to the chloroplast. Functionally, probable transcription factor that binds to acetylated histone H3. This is Transcription factor GTE3, chloroplastic (GTE3) from Arabidopsis thaliana (Mouse-ear cress).